The primary structure comprises 180 residues: Ribosome rescue factor SmrB (180 aa).

The region spanning 98 to 173 (LDLHGLTQLQ…GNAALLVLVA (76 aa)) is the Smr domain.

It belongs to the SmrB family. As to quaternary structure, associates with collided ribosomes, but not with correctly translating polysomes.

Its function is as follows. Acts as a ribosome collision sensor. Detects stalled/collided disomes (pairs of ribosomes where the leading ribosome is stalled and a second ribosome has collided with it) and endonucleolytically cleaves mRNA at the 5' boundary of the stalled ribosome. Stalled/collided disomes form a new interface (primarily via the 30S subunits) that binds SmrB. Cleaved mRNA becomes available for tmRNA ligation, leading to ribosomal subunit dissociation and rescue of stalled ribosomes. This chain is Ribosome rescue factor SmrB, found in Pectobacterium carotovorum subsp. carotovorum (strain PC1).